The following is a 101-amino-acid chain: Small ribosomal subunit protein uS14A (101 aa).

Belongs to the universal ribosomal protein uS14 family. Part of the 30S ribosomal subunit. Contacts proteins S3 and S10.

Binds 16S rRNA, required for the assembly of 30S particles and may also be responsible for determining the conformation of the 16S rRNA at the A site. This is Small ribosomal subunit protein uS14A from Mycolicibacterium smegmatis (strain ATCC 700084 / mc(2)155) (Mycobacterium smegmatis).